The chain runs to 461 residues: Anthocyanidin 3-O-glucoside 5-O-glucosyltransferase (461 aa).

Residues 1 to 15 (MSRAHVLLATFPAQG) form the signal peptide. His-16 acts as the Proton acceptor in catalysis. His-16 contributes to the an anthocyanidin binding site. Positions 338, 353, 356, 357, 358, 361, 377, and 378 each coordinate UDP-alpha-D-glucose.

Belongs to the UDP-glycosyltransferase family.

The enzyme catalyses an anthocyanidin 3-O-beta-D-glucoside + UDP-alpha-D-glucose = an anthocyanidin 3,5-di-O-beta-D-glucoside + UDP + 2 H(+). The protein operates within pigment biosynthesis; anthocyanin biosynthesis. Catalyzes the glucosylation at the O-5 position of anthocyanidin 3-glucosides to form anthocyanidin 3,5-di-O-glucosides using UDP-glucose as sugar donor. Anthocyanidin 3,5-di-O-glucosides are molecules that are responsible for pigmentation. Also acts on anthocyanidin 3-O-(6-O-malonylglucoside). Much less active with hydroxycinnamoylglucose derivatives. No activity in the absence of the 3-O-glucoside group. The sequence is that of Anthocyanidin 3-O-glucoside 5-O-glucosyltransferase (HGT8) from Verbena hybrida (Garden vervain).